A 211-amino-acid polypeptide reads, in one-letter code: ATP phosphoribosyltransferase (211 aa).

The protein belongs to the ATP phosphoribosyltransferase family. Short subfamily. Heteromultimer composed of HisG and HisZ subunits.

It is found in the cytoplasm. The catalysed reaction is 1-(5-phospho-beta-D-ribosyl)-ATP + diphosphate = 5-phospho-alpha-D-ribose 1-diphosphate + ATP. It participates in amino-acid biosynthesis; L-histidine biosynthesis; L-histidine from 5-phospho-alpha-D-ribose 1-diphosphate: step 1/9. Functionally, catalyzes the condensation of ATP and 5-phosphoribose 1-diphosphate to form N'-(5'-phosphoribosyl)-ATP (PR-ATP). Has a crucial role in the pathway because the rate of histidine biosynthesis seems to be controlled primarily by regulation of HisG enzymatic activity. This chain is ATP phosphoribosyltransferase, found in Thermosynechococcus vestitus (strain NIES-2133 / IAM M-273 / BP-1).